Consider the following 409-residue polypeptide: Diels-Alderase ucsH (409 aa).

Residues 386 to 406 form a helical membrane-spanning segment; sequence IYFFICMLLAVVTFGYINILE.

This sequence belongs to the Diels-Alderase family.

It localises to the membrane. Its pathway is mycotoxin biosynthesis. Functionally, diels-Alderase; part of the gene cluster that mediates the biosynthesis of UCS1025A, a member of the pyrrolizidinone family that acts as a strong telomerase inhibitor and displays potent antibacterial and antitumor properties. These compounds share a hemiaminal-containing pyrrolizidinone core fused with a gamma-lactone, giving a furopyrrolizidine that is connected to a decalin fragment. The polyketide synthase module (PKS) of the PKS-NRPS ucsA is responsible for the synthesis of the polyketide backbone via the condensation of an acetyl-CoA starter unit with 6 malonyl-CoA units. The downstream nonribosomal peptide synthetase (NRPS) module then amidates the carboxyl end of the polyketide with a 2S,3S-methylproline derived from L-isoleucine by the 2-oxoglutarate-dependent dioxygenase ucsF which converts L-isoleucine to (4S,5S)-4-methylpyrroline-5-carboxylate that is further converted to 2S,3S-methylproline by the pyrroline-5-carboxylate reductase ucsG. Reductive release of the completed aminoacyl polyketide from the assembly line can form the 3-pyrrolin-2-one structure via an intramolecular Knoevenagel reaction. Because ucsA lacks a designated enoylreductase (ER) domain, the required activity is provided the enoyl reductase ucsL. This keto acyclic precursor is the substrate of the Diels-Alderase ucsH, that catalyzes the Diels-Alder cycloaddition. Oxidation of the 3S-methyl group to a carboxylate by the cytochrome P450 monooxygenase ucsK allows an oxa-Michael cyclization that might involve the reductase/dehydrogenase ucsI and which furnishes the furopyrrolizidine. The oxidase ucsJ likely plays a critical role in stereoselective reduction of the C5-C6 double bond to afford the required R-configured carboxylate group. Further enolization and oxidation at C5 by an unidentified enzyme affords the last intermediate that can undergo oxa-Michael cyclization to yield UCS1025A. The polypeptide is Diels-Alderase ucsH (Acremonium sp).